Reading from the N-terminus, the 122-residue chain is Large ribosomal subunit protein uL14 (122 aa).

This sequence belongs to the universal ribosomal protein uL14 family. In terms of assembly, part of the 50S ribosomal subunit. Forms a cluster with proteins L3 and L19. In the 70S ribosome, L14 and L19 interact and together make contacts with the 16S rRNA in bridges B5 and B8.

In terms of biological role, binds to 23S rRNA. Forms part of two intersubunit bridges in the 70S ribosome. The protein is Large ribosomal subunit protein uL14 of Dechloromonas aromatica (strain RCB).